Here is a 94-residue protein sequence, read N- to C-terminus: Integration host factor subunit beta (94 aa).

It belongs to the bacterial histone-like protein family. In terms of assembly, heterodimer of an alpha and a beta chain.

Functionally, this protein is one of the two subunits of integration host factor, a specific DNA-binding protein that functions in genetic recombination as well as in transcriptional and translational control. This chain is Integration host factor subunit beta, found in Mesorhizobium japonicum (strain LMG 29417 / CECT 9101 / MAFF 303099) (Mesorhizobium loti (strain MAFF 303099)).